Reading from the N-terminus, the 54-residue chain is UPF0391 membrane protein Pnap_0920 (54 aa).

Helical transmembrane passes span 6–26 (VVFL…IAAG) and 30–50 (IAKI…VVSL).

This sequence belongs to the UPF0391 family.

It localises to the cell membrane. The protein is UPF0391 membrane protein Pnap_0920 of Polaromonas naphthalenivorans (strain CJ2).